Reading from the N-terminus, the 779-residue chain is Neutral ceramidase 1 (779 aa).

S350 serves as the catalytic Nucleophile. N368, N432, and N667 each carry an N-linked (GlcNAc...) asparagine glycan.

The protein belongs to the neutral ceramidase family. In terms of tissue distribution, mostly expressed in stems, leaves, roots and siliques, and, to a lower extent, in flowers.

Its subcellular location is the secreted. It localises to the endoplasmic reticulum. The protein resides in the golgi apparatus. The catalysed reaction is an N-acylsphing-4-enine + H2O = sphing-4-enine + a fatty acid. Hydrolyzes the sphingolipid ceramide into sphingosine and free fatty acid. Regulates sphingolipid homeostasis. Promotes oxidative stress resistance. In Arabidopsis thaliana (Mouse-ear cress), this protein is Neutral ceramidase 1.